The primary structure comprises 911 residues: MDTCGVGYVALGEAGPVGNMTVVDSPGQEVLNQLDVKTSSEMTSAEASVEMSLPTPLPGFEDSPDQRRLPPEQESLSRLEQPDLSSEMSKVSKPRASKPGRKRGGRTRKGPKRPQQPNPPSAPLVPGLLDQSNPLSTPMPKKRGRKSKAELLLLKLSKDLDRPESQSPKRPPEDFETPSGERPRRRAAQVALLYLQELAEELSTALPAPVSCPEGPKVSSPTKPKKIRQPAACPGGEEVDGAPRDEDFFLQVEAEDVEESEGPSESSSEPEPVVPRSTPRGSTSGKQKPHCRGMAPNGLPNHIMAPVWKCLHLTKDFREQKHSYWEFAEWIPLAWKWHLLSELEAAPYLPQEEKSPLFSVQREGLPEDGTLYRINRFSSITAHPERWDVSFFTGGPLWALDWCPVPEGAGASQYVALFSSPDMNETHPLSQLHSGPGLLQLWGLGTLQQESCPGNRAHFVYGIACDNGCIWDLKFCPSGAWELPGTPRKAPLLPRLGLLALACSDGKVLLFSLPHPEALLAQQPPDAVKPAIYKVQCVATLQVGSMQATDPSECGQCLSLAWMPTRPHQHLAAGYYNGMVVFWNLPTNSPLQRIRLSDGSLKLYPFQCFLAHDQAVRTLQWCKANSHFLVSAGSDRKIKFWDLRRPYEPINSIKRFLSTELAWLLPYNGVTVAQDNCYASYGLCGIHYIDAGYLGFKAYFTAPRKGTVWSLSGSDWLGTIAAGDISGELIAAILPDMALNPINVKRPVERRFPIYKADLIPYQDSPEGPDHSSASSGVPNPPKARTYTETVNHHYLLFQDTDLGSFHDLLRREPMLRMQEGEGHSQLCLDRLQLEAIHKVRFSPNLDSYGWLVSGGQSGLVRIHFVRGLASPLGHRMQLESRAHFNAMFQPSSPTRRPGFSPTSHRLLPTP.

Disordered regions lie at residues 24–187 (DSPG…RRRA) and 205–297 (ALPA…MAPN). The segment covering 35–46 (DVKTSSEMTSAE) has biased composition (polar residues). Phosphoserine is present on serine 63. Residues 64–81 (PDQRRLPPEQESLSRLEQ) show a composition bias toward basic and acidic residues. Residues 92–112 (SKPRASKPGRKRGGRTRKGPK) are compositionally biased toward basic residues. Residues 114 to 123 (PQQPNPPSAP) show a composition bias toward pro residues. A phosphoserine mark is found at serine 132, serine 165, serine 167, serine 220, and serine 260. Residues 253-262 (EAEDVEESEG) are compositionally biased toward acidic residues. Positions 263 to 277 (PSESSSEPEPVVPRS) are enriched in low complexity. WD repeat units follow at residues 366-426 (PEDG…MNET), 427-483 (HPLS…AWEL), 484-535 (PGTP…IYKV), 536-603 (QCVA…SLKL), 604-654 (YPFQ…NSIK), and 655-690 (RFLS…HYID). Serine 597 carries the phosphoserine modification. The disordered stretch occupies residues 765–785 (SPEGPDHSSASSGVPNPPKAR). Residues serine 871, serine 892, and serine 893 each carry the phosphoserine modification. Positions 889–911 (FQPSSPTRRPGFSPTSHRLLPTP) are disordered. Threonine 895 is subject to Phosphothreonine. Serine 901 is subject to Phosphoserine.

As to quaternary structure, part of the TFIIIC subcomplex TFIIIC2, consisting of six subunits, GTF3C1, GTF3C2, GTF3C3, GTF3C4, GTF3C5 and GTF3C6.

Its subcellular location is the nucleus. In terms of biological role, required for RNA polymerase III-mediated transcription. Component of TFIIIC that initiates transcription complex assembly on tRNA and is required for transcription of 5S rRNA and other stable nuclear and cytoplasmic RNAs. May play a direct role in stabilizing interactions of TFIIIC2 with TFIIIC1. This chain is General transcription factor 3C polypeptide 2 (GTF3C2), found in Homo sapiens (Human).